The chain runs to 359 residues: Methylthioribose-1-phosphate isomerase (359 aa).

Substrate is bound by residues 50-52 (RGA), Arg-93, and Gln-200. Residue Asp-241 is the Proton donor of the active site. Residue 251–252 (NK) coordinates substrate.

This sequence belongs to the eIF-2B alpha/beta/delta subunits family. MtnA subfamily.

The enzyme catalyses 5-(methylsulfanyl)-alpha-D-ribose 1-phosphate = 5-(methylsulfanyl)-D-ribulose 1-phosphate. The protein operates within amino-acid biosynthesis; L-methionine biosynthesis via salvage pathway; L-methionine from S-methyl-5-thio-alpha-D-ribose 1-phosphate: step 1/6. Catalyzes the interconversion of methylthioribose-1-phosphate (MTR-1-P) into methylthioribulose-1-phosphate (MTRu-1-P). This chain is Methylthioribose-1-phosphate isomerase, found in Symbiobacterium thermophilum (strain DSM 24528 / JCM 14929 / IAM 14863 / T).